Reading from the N-terminus, the 203-residue chain is Excretory canal abnormal exc-13 (203 aa).

The N-terminal stretch at 1–20 (MIGFLKFALIGTVLLGVANG) is a signal peptide. N-linked (GlcNAc...) asparagine glycans are attached at residues Asn32, Asn84, and Asn188.

The protein belongs to the UPF0376 family.

The protein localises to the secreted. The protein is Excretory canal abnormal exc-13 of Caenorhabditis elegans.